The following is an 863-amino-acid chain: Ribosomal protein S6 kinase alpha-5 (863 aa).

Residues M1 to G21 show a composition bias toward gly residues. A disordered region spans residues M1–E22. One can recognise a Protein kinase 1 domain in the interval F48–F317. Residues L54–V62 and K80 contribute to the ATP site. Residue D176 is the Proton acceptor of the active site. S211 bears the Phosphoserine; by autocatalysis mark. The 69-residue stretch at E318 to N386 folds into the AGC-kinase C-terminal domain. At S359 the chain carries Phosphoserine; by MAPK1, MAPK3 and MAPK14. 2 positions are modified to phosphoserine; by autocatalysis: S375 and S380. In terms of domain architecture, Protein kinase 2 spans D428–I675. ATP contacts are provided by residues L431–R440 and K454. The active-site Proton acceptor is D608. Position 645 is a phosphothreonine; by MAPK1, MAPK3 and MAPK14 (T645). S711, S721, S755, and S759 each carry phosphoserine. T764 carries the phosphothreonine modification. The segment at A805–D863 is disordered. Residues T813 to S832 are compositionally biased toward low complexity. A phosphoserine; by autocatalysis mark is found at S814, S816, and S822. The span at Q833 to D863 shows a compositional bias: polar residues. The residue at position 862 (S862) is a Phosphoserine.

Belongs to the protein kinase superfamily. AGC Ser/Thr protein kinase family. S6 kinase subfamily. In terms of assembly, forms a complex with either MAPK1/ERK2 or MAPK3/ERK1 in quiescent cells which transiently dissociates following mitogenic stimulation. Also associates with MAPK14/p38-alpha. Activated RPS6KA5 associates with and phosphorylates the NF-kappa-B p65 subunit RELA. Interacts with CREBBP and EP300. Requires Mg(2+) as cofactor. Ser-375 and Thr-645 phosphorylation is required for kinase activity. Ser-375 and Ser-211 are autophosphorylated by the C-terminal kinase domain, and their phosphorylation is essential for the catalytic activity of the N-terminal kinase domain. Phosphorylated at Ser-359, Thr-645 and Thr-764 by MAPK1/ERK2, MAPK3/ERK1 and MAPK14/p38-alpha. Autophosphorylated at Ser-814, Ser-816 and Ser-822 by the N-terminal kinase domain. Post-translationally, ubiquitinated.

It is found in the nucleus. The catalysed reaction is L-seryl-[protein] + ATP = O-phospho-L-seryl-[protein] + ADP + H(+). It catalyses the reaction L-threonyl-[protein] + ATP = O-phospho-L-threonyl-[protein] + ADP + H(+). With respect to regulation, activated by phosphorylation at Ser-359, Thr-645 and Thr-764 by MAPK1/ERK2, MAPK3/ERK1 and MAPK14/p38-alpha, and by further autophosphorylation of Ser-211, Ser-375 and Ser-380 by the activated C-terminal kinase domain. The active N-terminal kinase domain finally phosphorylates downstream substrates, as well as Ser-814, Ser-816 and Ser-822 in its own C-terminal region. Serine/threonine-protein kinase that is required for the mitogen or stress-induced phosphorylation of the transcription factors CREB1 and ATF1 and for the regulation of the transcription factors RELA, STAT3 and ETV1/ER81, and that contributes to gene activation by histone phosphorylation and functions in the regulation of inflammatory genes. Phosphorylates CREB1 and ATF1 in response to mitogenic or stress stimuli such as UV-C irradiation, epidermal growth factor (EGF) and anisomycin. Plays an essential role in the control of RELA transcriptional activity in response to TNF and upon glucocorticoid, associates in the cytoplasm with the glucocorticoid receptor NR3C1 and contributes to RELA inhibition and repression of inflammatory gene expression. In skeletal myoblasts is required for phosphorylation of RELA at 'Ser-276' during oxidative stress. In erythropoietin-stimulated cells, is necessary for the 'Ser-727' phosphorylation of STAT3 and regulation of its transcriptional potential. Phosphorylates ETV1/ER81 at 'Ser-191' and 'Ser-216', and thereby regulates its ability to stimulate transcription, which may be important during development and breast tumor formation. Directly represses transcription via phosphorylation of 'Ser-1' of histone H2A. Phosphorylates 'Ser-10' of histone H3 in response to mitogenics, stress stimuli and EGF, which results in the transcriptional activation of several immediate early genes, including proto-oncogenes c-fos/FOS and c-jun/JUN. May also phosphorylate 'Ser-28' of histone H3. Mediates the mitogen- and stress-induced phosphorylation of high mobility group protein 1 (HMGN1/HMG14). In lipopolysaccharide-stimulated primary macrophages, acts downstream of the Toll-like receptor TLR4 to limit the production of pro-inflammatory cytokines. Functions probably by inducing transcription of the MAP kinase phosphatase DUSP1 and the anti-inflammatory cytokine interleukin 10 (IL10), via CREB1 and ATF1 transcription factors. Plays a role in neuronal cell death by mediating the downstream effects of excitotoxic injury. Phosphorylates TRIM7 at 'Ser-106' in response to growth factor signaling via the MEK/ERK pathway, thereby stimulating its ubiquitin ligase activity. The protein is Ribosomal protein S6 kinase alpha-5 (Rps6ka5) of Mus musculus (Mouse).